A 289-amino-acid chain; its full sequence is (3R)-3-[(carboxymethyl)amino]fatty acid oxygenase/decarboxylase (289 aa).

A (3R)-3-[(carboxymethyl)amino]fatty acid-binding residues include Tyr-65, Tyr-70, and Gly-93. Residues His-97 and Asp-99 each contribute to the Fe(2+) site. Tyr-100 and Lys-158 together coordinate a (3R)-3-[(carboxymethyl)amino]fatty acid. A Fe(2+)-binding site is contributed by His-260. His-264 serves as a coordination point for 2-oxoglutarate. Arg-275 provides a ligand contact to a (3R)-3-[(carboxymethyl)amino]fatty acid.

The protein belongs to the TfdA dioxygenase family. It depends on Fe(2+) as a cofactor.

The enzyme catalyses a (3R)-3-[(carboxymethyl)amino]fatty acid + 2 2-oxoglutarate + 2 O2 = a (3R)-3-isocyanyl-fatty acid + 2 succinate + 3 CO2 + 2 H2O. The catalysed reaction is a (3R)-3-[(carboxymethyl)amino]fatty acid + 2-oxoglutarate + O2 = a (3R)-3-{[carboxy(hydroxy)methyl]amino}fatty acid + succinate + CO2. It carries out the reaction a (3R)-3-{[carboxy(hydroxy)methyl]amino}fatty acid + 2-oxoglutarate + O2 = a (3R)-3-isocyanyl-fatty acid + succinate + 2 CO2 + 2 H2O. Involved in the biosynthesis of a unique class of isonitrile lipopeptides (INLPs) that seem to play a role in metal acquisition. Catalyzes the conversion of (3R)-3-[(carboxymethyl)amino]fatty acids to (3R)-3-isocyanyl-fatty acids through an oxidative decarboxylation mechanism, thereby generating the isonitrile group of INLPs. This chain is (3R)-3-[(carboxymethyl)amino]fatty acid oxygenase/decarboxylase, found in Mycobacterium bovis (strain ATCC BAA-935 / AF2122/97).